Consider the following 341-residue polypeptide: tRNA N6-adenosine threonylcarbamoyltransferase (341 aa).

Positions 116 and 120 each coordinate Fe cation. Substrate is bound by residues 139-143 (LVSGG), Asp172, Gly185, and Asn274. Asp302 is a Fe cation binding site.

It belongs to the KAE1 / TsaD family. It depends on Fe(2+) as a cofactor.

The protein resides in the cytoplasm. It catalyses the reaction L-threonylcarbamoyladenylate + adenosine(37) in tRNA = N(6)-L-threonylcarbamoyladenosine(37) in tRNA + AMP + H(+). Functionally, required for the formation of a threonylcarbamoyl group on adenosine at position 37 (t(6)A37) in tRNAs that read codons beginning with adenine. Is involved in the transfer of the threonylcarbamoyl moiety of threonylcarbamoyl-AMP (TC-AMP) to the N6 group of A37, together with TsaE and TsaB. TsaD likely plays a direct catalytic role in this reaction. This Vesicomyosocius okutanii subsp. Calyptogena okutanii (strain HA) protein is tRNA N6-adenosine threonylcarbamoyltransferase.